The sequence spans 291 residues: Stomatin-like protein 3 (291 aa).

Serine 7 is modified (phosphoserine). A helical; Signal-anchor for type III membrane protein transmembrane segment spans residues 29 to 49 (WILFSLSFLLVIITFPISIWM). Residues 50-291 (CLKIIKEYER…DNHKKLPNKA (242 aa)) lie on the Cytoplasmic side of the membrane. At serine 241 the chain carries Phosphoserine.

This sequence belongs to the band 7/mec-2 family. In terms of assembly, homodimer. Interacts with PIEZO1 and PIEZO2.

The protein localises to the cell membrane. Functionally, required for the function of many mechanoreceptors. Modulate mechanotransduction channels and acid-sensing ion channels (ASIC) proteins. Potentiates PIEZO1 and PIEZO2 function by increasing their sensitivity to mechanical stimulations. The chain is Stomatin-like protein 3 (STOML3) from Homo sapiens (Human).